Here is a 418-residue protein sequence, read N- to C-terminus: Elongation factor Tu, chloroplastic (418 aa).

Residues 10–214 (KPHVNIGTIG…NVDSYIPTPQ (205 aa)) enclose the tr-type G domain. Residues 19–26 (GHVDHGKT) are G1. 19-26 (GHVDHGKT) contributes to the GTP binding site. Mg(2+) is bound at residue T26. Positions 60–64 (GITIN) are G2. A G3 region spans residues 81 to 84 (DCPG). Residues 81-85 (DCPGH) and 136-139 (NKED) each bind GTP. A G4 region spans residues 136 to 139 (NKED). Residues 174-176 (SAL) are G5.

It belongs to the TRAFAC class translation factor GTPase superfamily. Classic translation factor GTPase family. EF-Tu/EF-1A subfamily.

It localises to the plastid. The protein resides in the chloroplast. It catalyses the reaction GTP + H2O = GDP + phosphate + H(+). Its function is as follows. GTP hydrolase that promotes the GTP-dependent binding of aminoacyl-tRNA to the A-site of ribosomes during protein biosynthesis. The sequence is that of Elongation factor Tu, chloroplastic (tufA) from Chlamydomonas reinhardtii (Chlamydomonas smithii).